A 2083-amino-acid polypeptide reads, in one-letter code: Nonribosomal peptide synthetase sidD (2083 aa).

The tract at residues 251 to 650 is adenylation 1; sequence TYRQIDQYSS…GEIESQLRAR (400 aa). Residues 764-840 form the Carrier 1 domain; the sequence is RELSDLERRL…AMASVVRICD (77 aa). Serine 801 carries the O-(pantetheine 4'-phosphoryl)serine modification. The interval 876–1146 is condensation 1; that stretch reads EDIYPCTPTQ…IATVPIRVRI (271 aa). The tract at residues 1336–1421 is adenylation 2; that stretch reads LSPIGCVGEL…TEIERHLAEH (86 aa). Positions 1557-1633 constitute a Carrier 2 domain; the sequence is NHLSASESIL…DAARVMKVDE (77 aa). Serine 1594 carries the post-translational modification O-(pantetheine 4'-phosphoryl)serine. Residues 1674-1946 form a condensation 2 region; it reads DVLPVTDSQD…YQLTPVRVPF (273 aa).

It belongs to the NRP synthetase family.

The protein operates within siderophore biosynthesis. Functionally, nonribosomal peptide synthetase; part of the siderophore biosynthetic pathway. Aspergillus fumigatus produces four types of siderophores, low-molecular-mass iron chelators, including excreted fusarinine C (FsC) and triacetylfusarinine C (TAFC) for iron uptake; and intacellular ferricrocin (FC) for hyphal and hydroxyferricrocin (HFC) for conidial iron distribution and storage. TAFC consists of three N(2)-acetyl-N(5)-anhydromevalonyl-N(5)-hydroxyornithine residues cyclically linked by ester bonds; FC is a cyclic hexapeptide with the structure Gly-Ser-Gly-(N(5)-acetyl-N(5)-hydroxyornithine)x3. The biosynthesis of all four siderophores depends on the hydroxylation of ornithine, catalyzed by the monooxygenase sidA. Subsequently, the pathways for biosynthesis of extra- and intracellular siderophores split. For biosynthesis of extracellular siderophores, the transacylase sidF transfers anhydromevalonyl to N(5)-hydroxyornithine. The required anhydromevalonyl-CoA moiety is derived from mevalonate by CoA ligation and dehydration catalyzed by sidI and sidH respectively. The acetylation of N(5)-hydroxyornithine for FC biosynthesis involves the constitutively expressed sidL. FC is hydroxylated to HFC by an as yet uncharacterized enzyme during conidiation. Assembly of fusarinine C (FsC) and FC is catalyzed by two different nonribosomal peptide synthetases (NRPS), sidD and sidC respectively. Subsequently, sidG catalyzes N2-acetylation of FsC for forming TAFC. Both extra- and intracellular siderophores are crucial for growth during iron limitation and virulence. This chain is Nonribosomal peptide synthetase sidD, found in Aspergillus fumigatus (strain ATCC MYA-4609 / CBS 101355 / FGSC A1100 / Af293) (Neosartorya fumigata).